We begin with the raw amino-acid sequence, 530 residues long: Arginine-containing cyclodipeptide synthase pthA (530 aa).

Residues 419 to 423 (DDRAE) carry the Conserved DDXXE motif motif.

This sequence belongs to the arginine-containing cyclodipeptide synthase family.

The catalysed reaction is L-aspartyl-tRNA(Asp) + L-arginyl-tRNA(Arg) = cyclo(L-arginyl-L-aspartyl) + tRNA(Asp) + tRNA(Arg) + 2 H(+). It functions in the pathway secondary metabolite biosynthesis. Arginine-containing cyclodipeptide synthase; part of the cluster that mediates the biosynthesis of a highly modified cyclo-arginine-aspartate dipeptide (cRD). Within the pathway, pthA acts as the scaffold-generating enzyme and is responsible for formation of the cyclo-Arg-Asp diketopiperazine (cRW) from L-arginyl-tRNA(Arg) + L-aspartyl-tRNA(Asp). Additional enzymes from the cluster then further modify the cyclo-Arg-Asp diketopiperazine (cRW) scaffold. The chain is Arginine-containing cyclodipeptide synthase pthA from Penicillium thymicola.